The primary structure comprises 208 residues: Small ribosomal subunit protein uS3 (208 aa).

The KH type-2 domain occupies 17–86 (IDEYLEKELR…NPQIEVEEIK (70 aa)).

The protein belongs to the universal ribosomal protein uS3 family. Part of the 30S ribosomal subunit.

Functionally, binds the lower part of the 30S subunit head. The sequence is that of Small ribosomal subunit protein uS3 from Thermococcus onnurineus (strain NA1).